The following is a 181-amino-acid chain: Endoribonuclease YbeY (181 aa).

Residues His-115, His-119, and His-125 each contribute to the Zn(2+) site.

Belongs to the endoribonuclease YbeY family. It depends on Zn(2+) as a cofactor.

The protein resides in the cytoplasm. Single strand-specific metallo-endoribonuclease involved in late-stage 70S ribosome quality control and in maturation of the 3' terminus of the 16S rRNA. This chain is Endoribonuclease YbeY, found in Bifidobacterium adolescentis (strain ATCC 15703 / DSM 20083 / NCTC 11814 / E194a).